The primary structure comprises 269 residues: Leucinostatins biosynthesis cluster protein T (269 aa).

A signal peptide spans 1–15 (MHIILTGTGLVGAIA). An N-linked (GlcNAc...) asparagine glycan is attached at Asn254.

In terms of biological role, part of the gene cluster that mediates the biosynthesis of the lipopeptide antibiotics leucinostatins that show extensive biological activities, including antimalarial, antiviral, antibacterial, antifungal, and antitumor activities, as well as phytotoxic. The function of lcsT within the leucinostatins biosynthesis has not been identified yet. In Purpureocillium lilacinum (Paecilomyces lilacinus), this protein is Leucinostatins biosynthesis cluster protein T.